Consider the following 182-residue polypeptide: Ribosome-recycling factor (182 aa).

Belongs to the RRF family.

The protein resides in the cytoplasm. Responsible for the release of ribosomes from messenger RNA at the termination of protein biosynthesis. May increase the efficiency of translation by recycling ribosomes from one round of translation to another. In Cyanothece sp. (strain PCC 7425 / ATCC 29141), this protein is Ribosome-recycling factor.